A 140-amino-acid polypeptide reads, in one-letter code: Arsenate-mycothiol transferase ArsC1 (140 aa).

Belongs to the low molecular weight phosphotyrosine protein phosphatase family.

It localises to the cytoplasm. It catalyses the reaction mycothiol + arsenate = arseno-mycothiol + H2O. Its function is as follows. Involved in defense against toxic arsenate. Involved in the mycothiol/myoredoxin redox pathway which uses a mycothioltransferase mechanism; facilitates adduct formation between arsenate and mycothiol. The polypeptide is Arsenate-mycothiol transferase ArsC1 (arsC1) (Corynebacterium glutamicum (strain ATCC 13032 / K051)).